Reading from the N-terminus, the 429-residue chain is Serine--tRNA ligase (429 aa).

234–236 (TSE) serves as a coordination point for L-serine. Residues 265–267 (RKE) and Val-281 each bind ATP. Glu-288 contacts L-serine. 352–355 (ELVS) serves as a coordination point for ATP. L-serine is bound at residue Thr-389.

The protein belongs to the class-II aminoacyl-tRNA synthetase family. Type-1 seryl-tRNA synthetase subfamily. As to quaternary structure, homodimer. The tRNA molecule probably binds across the dimer.

It catalyses the reaction tRNA(Ser) + L-serine + ATP = L-seryl-tRNA(Ser) + AMP + diphosphate + H(+). The catalysed reaction is tRNA(Sec) + L-serine + ATP = L-seryl-tRNA(Sec) + AMP + diphosphate + H(+). It functions in the pathway aminoacyl-tRNA biosynthesis; selenocysteinyl-tRNA(Sec) biosynthesis; L-seryl-tRNA(Sec) from L-serine and tRNA(Sec): step 1/1. Functionally, catalyzes the attachment of serine to tRNA(Ser). Is also probably able to aminoacylate tRNA(Sec) with serine, to form the misacylated tRNA L-seryl-tRNA(Sec), which will be further converted into selenocysteinyl-tRNA(Sec). The polypeptide is Serine--tRNA ligase (Encephalitozoon cuniculi (strain GB-M1) (Microsporidian parasite)).